The following is a 293-amino-acid chain: Phosphatidylserine decarboxylase proenzyme (293 aa).

Catalysis depends on charge relay system; for autoendoproteolytic cleavage activity residues Asp90, His147, and Ser254. Residue Ser254 is the Schiff-base intermediate with substrate; via pyruvic acid; for decarboxylase activity of the active site. Ser254 bears the Pyruvic acid (Ser); by autocatalysis mark.

Belongs to the phosphatidylserine decarboxylase family. PSD-B subfamily. Prokaryotic type I sub-subfamily. As to quaternary structure, heterodimer of a large membrane-associated beta subunit and a small pyruvoyl-containing alpha subunit. It depends on pyruvate as a cofactor. Is synthesized initially as an inactive proenzyme. Formation of the active enzyme involves a self-maturation process in which the active site pyruvoyl group is generated from an internal serine residue via an autocatalytic post-translational modification. Two non-identical subunits are generated from the proenzyme in this reaction, and the pyruvate is formed at the N-terminus of the alpha chain, which is derived from the carboxyl end of the proenzyme. The autoendoproteolytic cleavage occurs by a canonical serine protease mechanism, in which the side chain hydroxyl group of the serine supplies its oxygen atom to form the C-terminus of the beta chain, while the remainder of the serine residue undergoes an oxidative deamination to produce ammonia and the pyruvoyl prosthetic group on the alpha chain. During this reaction, the Ser that is part of the protease active site of the proenzyme becomes the pyruvoyl prosthetic group, which constitutes an essential element of the active site of the mature decarboxylase.

The protein resides in the cell membrane. The catalysed reaction is a 1,2-diacyl-sn-glycero-3-phospho-L-serine + H(+) = a 1,2-diacyl-sn-glycero-3-phosphoethanolamine + CO2. Its pathway is phospholipid metabolism; phosphatidylethanolamine biosynthesis; phosphatidylethanolamine from CDP-diacylglycerol: step 2/2. Catalyzes the formation of phosphatidylethanolamine (PtdEtn) from phosphatidylserine (PtdSer). The chain is Phosphatidylserine decarboxylase proenzyme from Yersinia pseudotuberculosis serotype O:1b (strain IP 31758).